The following is a 280-amino-acid chain: MSKVITDVFYTAFKTALPLTSSPLVQCITNEITVESMANALLYIDAKPVMADDQREFPEFFAQSDALLLNLGHISEVRQQNLLAAGKFAQATNQPTVIDLVGVSATQLRYDLGHQLLANHPNVVKGNISEMRRFADLKSTGRGVDGSQLDQSATALGELAASLQQLTQAFPTTTFLATGKIDLVVSAKGTWYLKNGVPQLDRFTGTGDIVGALIAALLGTGLDNDAAVVVAVSYFNCCGEVAAAQNRTGGLAAFREGTLNQLSLLAATADWLQMVKGEAL.

Substrate is bound at residue Met-50. Lys-125 and Thr-178 together coordinate ATP. Gly-205 is a binding site for substrate.

The protein belongs to the Thz kinase family. It depends on Mg(2+) as a cofactor.

It carries out the reaction 5-(2-hydroxyethyl)-4-methylthiazole + ATP = 4-methyl-5-(2-phosphooxyethyl)-thiazole + ADP + H(+). The protein operates within cofactor biosynthesis; thiamine diphosphate biosynthesis; 4-methyl-5-(2-phosphoethyl)-thiazole from 5-(2-hydroxyethyl)-4-methylthiazole: step 1/1. Functionally, catalyzes the phosphorylation of the hydroxyl group of 4-methyl-5-beta-hydroxyethylthiazole (THZ). The chain is Hydroxyethylthiazole kinase from Lacticaseibacillus casei (strain BL23) (Lactobacillus casei).